Reading from the N-terminus, the 418-residue chain is Xanthosine permease (418 aa).

At 1–9 (MSIAMRLKV) the chain is on the cytoplasmic side. A helical membrane pass occupies residues 10–30 (MSFLQYFIWGSWLVTLGSYMI). Residues 31–41 (NTLHFTGANVG) are Periplasmic-facing. The helical transmembrane segment at 42 to 62 (MVYSSKGIAAIIMPGIMGIIA) threads the bilayer. The Cytoplasmic portion of the chain corresponds to 63-70 (DKWLRAER). 2 consecutive transmembrane segments (helical) span residues 71 to 91 (AYML…SVTD) and 92 to 112 (PDMM…TIAL). At 113–136 (SNSVSYSCLAQAGLDPVTAFPPIR) the chain is on the cytoplasmic side. The helical transmembrane segment at 137–157 (VFGTVGFIVAMWAVSLLHLEL) threads the bilayer. The Periplasmic segment spans residues 158–159 (SS). Residues 160-180 (LQLYIASGASLLLSAYALTLP) form a helical membrane-spanning segment. Residues 181–209 (KIPVAEKKATTSLASKLGLDAFVLFKNPR) are Cytoplasmic-facing. Residues 210–230 (MAIFFLFAMMLGAVLQITNVF) form a helical membrane-spanning segment. At 231–254 (GNPFLHDFARNPEFADSFVVKYPS) the chain is on the periplasmic side. Residues 255-275 (ILLSVSQMAEVGFILTIPFFL) traverse the membrane as a helical segment. Residues 276 to 277 (KR) are Cytoplasmic-facing. Residues 278–298 (FGIKTVMLMSMVAWTLRFGFF) form a helical membrane-spanning segment. At 299-306 (AYGDPSTT) the chain is on the periplasmic side. The chain crosses the membrane as a helical span at residues 307–327 (GFILLLLSMIVYGCAFDFFNI). At 328-348 (SGSVFVEQEVDSSIRASAQGL) the chain is on the cytoplasmic side. The helical transmembrane segment at 349 to 369 (FMTMVNGVGAWVGSILSGMAV) threads the bilayer. Residues 370–381 (DYFSVDGVKDWQ) are Periplasmic-facing. A helical membrane pass occupies residues 382-402 (TIWLVFAGYALFLAVIFFFGF). The Cytoplasmic portion of the chain corresponds to 403-418 (KYNHDPEKIKHRAVTH).

The protein belongs to the major facilitator superfamily. Nucleoside:H(+) symporter (NHS) (TC 2.A.1.10) family.

It localises to the cell inner membrane. It carries out the reaction xanthosine(in) + H(+)(in) = xanthosine(out) + H(+)(out). Its activity is regulated as follows. Transport is abolished by the proton uncoupler 2,4-dinitrophenol. Uptake of xanthosine. Can also transport other nucleosides such as inosine, adenosine, cytidine, uridine and thymidine. Transport is driven by a proton motive force. The sequence is that of Xanthosine permease from Escherichia coli (strain K12).